We begin with the raw amino-acid sequence, 396 residues long: Adenosine deaminase 1 (396 aa).

The segment at 1 to 26 (MTSRSTEKSAAANPAAVSKTPSPDRI) is disordered. Zn(2+)-binding residues include His-35 and His-37. Substrate is bound by residues His-37, Asp-39, and Gly-197. His-224 is a binding site for Zn(2+). Residue Glu-227 is the Proton donor of the active site. Asp-316 is a binding site for Zn(2+).

Belongs to the metallo-dependent hydrolases superfamily. Adenosine and AMP deaminases family. Adenosine deaminase subfamily. As to quaternary structure, homotetramer. Zn(2+) serves as cofactor.

The enzyme catalyses adenosine + H2O + H(+) = inosine + NH4(+). The catalysed reaction is 2'-deoxyadenosine + H2O + H(+) = 2'-deoxyinosine + NH4(+). Coformycin and 2'-deoxycoformycin, whose structures mimic the transition state of the deamination reaction, are potent competitive inhibitors. In terms of biological role, catalyzes the hydrolytic deamination of adenosine and 2-deoxyadenosine. The chain is Adenosine deaminase 1 from Streptomyces coelicolor (strain ATCC BAA-471 / A3(2) / M145).